Consider the following 141-residue polypeptide: Hemoglobin subunit alpha-2 (141 aa).

Residues 1–141 enclose the Globin domain; the sequence is VLTEDDKNHV…VCKDLVSKYR (141 aa). Residue His58 participates in O2 binding. His87 contributes to the heme b binding site.

The protein belongs to the globin family. The major hemoglobin component (HbIII) is a heterotetramer of two alpha-2 chains and two beta-1 chains. In terms of tissue distribution, red blood cells.

Its function is as follows. Involved in oxygen transport from the lung to the various peripheral tissues. In Varanus albigularis (White-throated monitor), this protein is Hemoglobin subunit alpha-2.